We begin with the raw amino-acid sequence, 572 residues long: Probable serine/threonine-protein kinase At1g54610 (572 aa).

The tract at residues 1–89 (MGCVFGREAA…SNPSKHWRGE (89 aa)) is disordered. Residues 9–40 (AATTTTAEAKQAKSSKASSGVVVVGESSVTKS) show a composition bias toward low complexity. Positions 47 to 67 (DVEKKKNEEANGDKERKSSKG) are enriched in basic and acidic residues. Positions 74–83 (KPNPRLSNPS) are enriched in polar residues. Positions 118-402 (FEKIDKIGQG…ASAALKSEFF (285 aa)) constitute a Protein kinase domain. ATP contacts are provided by residues 124-132 (IGQGTYSNV) and Lys-147. Asp-242 serves as the catalytic Proton acceptor. 2 disordered regions span residues 409–474 (CEPA…NVDR) and 526–572 (SSFN…AVVA). A compositionally biased stretch (basic and acidic residues) spans 419-434 (PSKEIDAKRRDEETRR). Residues 554-572 (SRKKKDNTKSSKGKRAVVA) show a composition bias toward basic residues.

It belongs to the protein kinase superfamily. Ser/Thr protein kinase family.

The enzyme catalyses L-seryl-[protein] + ATP = O-phospho-L-seryl-[protein] + ADP + H(+). It carries out the reaction L-threonyl-[protein] + ATP = O-phospho-L-threonyl-[protein] + ADP + H(+). The sequence is that of Probable serine/threonine-protein kinase At1g54610 from Arabidopsis thaliana (Mouse-ear cress).